Consider the following 647-residue polypeptide: Probable potassium transport system protein Kup (647 aa).

13 helical membrane-spanning segments follow: residues 32–52, 74–94, 124–144, 166–186, 193–213, 230–250, 271–291, 300–320, 322–342, 361–381, 390–410, 418–438, and 443–463; these read IALM…SPLY, VISM…VLFV, LLII…AIIT, FVLP…KTGT, FGPI…HQVI, FLIE…LVLT, WFFI…AMFL, PFFL…ATAA, VIAS…AILL, IYMP…VLAF, AYGI…AIVM, TILV…FLTA, and IMEG…FLMT.

It belongs to the HAK/KUP transporter (TC 2.A.72) family.

It localises to the cell inner membrane. It catalyses the reaction K(+)(in) + H(+)(in) = K(+)(out) + H(+)(out). Transport of potassium into the cell. Likely operates as a K(+):H(+) symporter. The polypeptide is Probable potassium transport system protein Kup (Polynucleobacter asymbioticus (strain DSM 18221 / CIP 109841 / QLW-P1DMWA-1) (Polynucleobacter necessarius subsp. asymbioticus)).